The following is a 475-amino-acid chain: Sulfate adenylyltransferase subunit 1 (475 aa).

A tr-type G domain is found at 25-239; sequence KSLLRFLTCG…EVLETVEIQR (215 aa). A G1 region spans residues 34 to 41; sequence GSVDDGKS. 34-41 contacts GTP; it reads GSVDDGKS. Positions 92 to 96 are G2; that stretch reads GITID. The G3 stretch occupies residues 113–116; that stretch reads DTPG. GTP-binding positions include 113 to 117 and 168 to 171; these read DTPGH and NKMD. Residues 168 to 171 form a G4 region; sequence NKMD. The G5 stretch occupies residues 206 to 208; the sequence is SAL.

Belongs to the TRAFAC class translation factor GTPase superfamily. Classic translation factor GTPase family. CysN/NodQ subfamily. As to quaternary structure, heterodimer composed of CysD, the smaller subunit, and CysN.

It carries out the reaction sulfate + ATP + H(+) = adenosine 5'-phosphosulfate + diphosphate. It functions in the pathway sulfur metabolism; hydrogen sulfide biosynthesis; sulfite from sulfate: step 1/3. In terms of biological role, with CysD forms the ATP sulfurylase (ATPS) that catalyzes the adenylation of sulfate producing adenosine 5'-phosphosulfate (APS) and diphosphate, the first enzymatic step in sulfur assimilation pathway. APS synthesis involves the formation of a high-energy phosphoric-sulfuric acid anhydride bond driven by GTP hydrolysis by CysN coupled to ATP hydrolysis by CysD. The chain is Sulfate adenylyltransferase subunit 1 from Escherichia coli (strain 55989 / EAEC).